The primary structure comprises 151 residues: Transcriptional repressor NrdR (151 aa).

The segment at 3–34 (CPFCNAQDTKVIDSRLVSEGSQVRRRRSCNEC) is a zinc-finger region. An ATP-cone domain is found at 49-139 (PRLIKSDGRR…VYRSFKDVKE (91 aa)).

This sequence belongs to the NrdR family. It depends on Zn(2+) as a cofactor.

Functionally, negatively regulates transcription of bacterial ribonucleotide reductase nrd genes and operons by binding to NrdR-boxes. The chain is Transcriptional repressor NrdR from Psychromonas ingrahamii (strain DSM 17664 / CCUG 51855 / 37).